The chain runs to 181 residues: Trafficking protein particle complex subunit 3-like protein (181 aa).

C68 is lipidated: S-palmitoyl cysteine.

It belongs to the TRAPP small subunits family. BET3 subfamily. Homodimer. Component of the multisubunit TRAPP (transport protein particle) complex, which includes at least TRAPPC2, TRAPPC2L, TRAPPC3, TRAPPC3L, TRAPPC4, TRAPPC5, TRAPPC8, TRAPPC9, TRAPPC10, TRAPPC11 and TRAPPC12.

It is found in the golgi apparatus. The protein resides in the cis-Golgi network. The protein localises to the endoplasmic reticulum. Functionally, may play a role in vesicular transport from endoplasmic reticulum to Golgi. The polypeptide is Trafficking protein particle complex subunit 3-like protein (Trappc3l) (Mus musculus (Mouse)).